Reading from the N-terminus, the 340-residue chain is Phosphoribosylformylglycinamidine cyclo-ligase (340 aa).

This sequence belongs to the AIR synthase family.

The protein localises to the cytoplasm. The enzyme catalyses 2-formamido-N(1)-(5-O-phospho-beta-D-ribosyl)acetamidine + ATP = 5-amino-1-(5-phospho-beta-D-ribosyl)imidazole + ADP + phosphate + H(+). It functions in the pathway purine metabolism; IMP biosynthesis via de novo pathway; 5-amino-1-(5-phospho-D-ribosyl)imidazole from N(2)-formyl-N(1)-(5-phospho-D-ribosyl)glycinamide: step 2/2. The sequence is that of Phosphoribosylformylglycinamidine cyclo-ligase from Streptococcus pyogenes serotype M28 (strain MGAS6180).